A 333-amino-acid chain; its full sequence is MRITVLGAGAWGTALSVGIAPRHDTLLWARDAAQAAHIEASRDNRRYLPGVALPAALRLTADLDAAIAHAQADGGLIVIATPMSGLREMLARCAASGAGLWWLCKGFEAGTGALGHEVAREVAPAARVGVLSGPSFALEVARGQPTALVAASTDEALRNQAVEAFHSESLRVYTSADPVGVEVGGAVKNVIAIATGIADGMGLGLNARAALVTRGLAEITRLGTALGARVDTFMGLSGLGDLVLTATGDLSRNRQVGLQLAQGRSLPEVLAALGHVAEGVYSAATVLARAQALGVDMPITAAVVAVLDGRLTPAQALERLMRRQARAEGHAPD.

NADPH is bound by residues Trp-11, Arg-30, and Lys-105. Residues Lys-105, Gly-133, and Ser-135 each coordinate sn-glycerol 3-phosphate. An NADPH-binding site is contributed by Ala-137. Lys-188, Asp-241, Ser-251, Arg-252, and Asn-253 together coordinate sn-glycerol 3-phosphate. The active-site Proton acceptor is Lys-188. Arg-252 is an NADPH binding site. 2 residues coordinate NADPH: Val-276 and Glu-278.

The protein belongs to the NAD-dependent glycerol-3-phosphate dehydrogenase family.

Its subcellular location is the cytoplasm. The catalysed reaction is sn-glycerol 3-phosphate + NAD(+) = dihydroxyacetone phosphate + NADH + H(+). The enzyme catalyses sn-glycerol 3-phosphate + NADP(+) = dihydroxyacetone phosphate + NADPH + H(+). It participates in membrane lipid metabolism; glycerophospholipid metabolism. In terms of biological role, catalyzes the reduction of the glycolytic intermediate dihydroxyacetone phosphate (DHAP) to sn-glycerol 3-phosphate (G3P), the key precursor for phospholipid synthesis. This chain is Glycerol-3-phosphate dehydrogenase [NAD(P)+], found in Methylibium petroleiphilum (strain ATCC BAA-1232 / LMG 22953 / PM1).